We begin with the raw amino-acid sequence, 83 residues long: RNA-binding protein Hfq (83 aa).

The region spanning 10–69 is the Sm domain; it reads DPFLNALRREHVPVSIYLVNGIKLQGQIESFDQYVVLLRNTVTQMVYKHAISTIVPGRAV.

This sequence belongs to the Hfq family. As to quaternary structure, homohexamer.

Functionally, RNA chaperone that binds small regulatory RNA (sRNAs) and mRNAs to facilitate mRNA translational regulation in response to envelope stress, environmental stress and changes in metabolite concentrations. Also binds with high specificity to tRNAs. In Paracidovorax citrulli (strain AAC00-1) (Acidovorax citrulli), this protein is RNA-binding protein Hfq.